The sequence spans 189 residues: MRLKLILYFLILSCYLGIGSARAATLMHGVANTWNSFSDNVSQTWNDPQTFDLYVPAVTWHNRWTYDSDKIDKYNERPWGAGGGISHYDEKGNWNGIYLMAFKDSFNKWEPIGGYGWEKTWRPLADPDFHLGLGYTAGVTMRDNWNYIPIPVLLPLASIGYGSATFQMTYIPGTYNNGNVYFAWLRWQF.

A signal peptide spans 1–23 (MRLKLILYFLILSCYLGIGSARA). Catalysis depends on residues His-61, Asp-104, and Ser-105.

It belongs to the lipid A palmitoyltransferase family. As to quaternary structure, homodimer.

Its subcellular location is the cell outer membrane. It catalyses the reaction a lipid A + a 1,2-diacyl-sn-glycero-3-phosphocholine = a hepta-acyl lipid A + a 2-acyl-sn-glycero-3-phosphocholine. It carries out the reaction a lipid IVA + a 1,2-diacyl-sn-glycero-3-phosphocholine = a lipid IVB + a 2-acyl-sn-glycero-3-phosphocholine. The enzyme catalyses a lipid IIA + a 1,2-diacyl-sn-glycero-3-phosphocholine = a lipid IIB + a 2-acyl-sn-glycero-3-phosphocholine. Transfers a fatty acid residue from the sn-1 position of a phospholipid to the N-linked hydroxyfatty acid chain on the proximal unit of lipid A or its precursors. This chain is Lipid A acyltransferase PagP, found in Erwinia tasmaniensis (strain DSM 17950 / CFBP 7177 / CIP 109463 / NCPPB 4357 / Et1/99).